Consider the following 368-residue polypeptide: tRNA 2-selenouridine synthase (368 aa).

The region spanning 15 to 138 (FLNQHPIMDV…MRQYLIGVIE (124 aa)) is the Rhodanese domain. The active-site S-selanylcysteine intermediate is cysteine 98.

It belongs to the SelU family. In terms of assembly, monomer.

It catalyses the reaction 5-methylaminomethyl-2-thiouridine(34) in tRNA + selenophosphate + (2E)-geranyl diphosphate + H2O + H(+) = 5-methylaminomethyl-2-selenouridine(34) in tRNA + (2E)-thiogeraniol + phosphate + diphosphate. The catalysed reaction is 5-methylaminomethyl-2-thiouridine(34) in tRNA + (2E)-geranyl diphosphate = 5-methylaminomethyl-S-(2E)-geranyl-thiouridine(34) in tRNA + diphosphate. The enzyme catalyses 5-methylaminomethyl-S-(2E)-geranyl-thiouridine(34) in tRNA + selenophosphate + H(+) = 5-methylaminomethyl-2-(Se-phospho)selenouridine(34) in tRNA + (2E)-thiogeraniol. It carries out the reaction 5-methylaminomethyl-2-(Se-phospho)selenouridine(34) in tRNA + H2O = 5-methylaminomethyl-2-selenouridine(34) in tRNA + phosphate. Its function is as follows. Involved in the post-transcriptional modification of the uridine at the wobble position (U34) of tRNA(Lys), tRNA(Glu) and tRNA(Gln). Catalyzes the conversion of 2-thiouridine (S2U-RNA) to 2-selenouridine (Se2U-RNA). Acts in a two-step process involving geranylation of 2-thiouridine (S2U) to S-geranyl-2-thiouridine (geS2U) and subsequent selenation of the latter derivative to 2-selenouridine (Se2U) in the tRNA chain. The sequence is that of tRNA 2-selenouridine synthase from Shewanella baltica (strain OS155 / ATCC BAA-1091).